A 157-amino-acid polypeptide reads, in one-letter code: Rieske domain-containing protein (157 aa).

The residue at position 1 (M1) is an N-acetylmethionine. S6 carries the phosphoserine modification. Rieske domains are found at residues 16-94 (SSVC…TGEG) and 17-131 (SVCV…NIYV). [2Fe-2S] cluster contacts are provided by C57, H59, C80, and H83.

Requires [2Fe-2S] cluster as cofactor.

The chain is Rieske domain-containing protein (RFESD) from Homo sapiens (Human).